We begin with the raw amino-acid sequence, 228 residues long: Probable calcium-binding protein CML48 (228 aa).

2 EF-hand domains span residues 52–87 and 121–156; these read ETHP…SGYD and NCLA…LGCV. Ca(2+)-binding residues include aspartate 65, asparagine 67, serine 69, and glutamate 76.

Potential calcium sensor. The protein is Probable calcium-binding protein CML48 (CML48) of Arabidopsis thaliana (Mouse-ear cress).